The chain runs to 733 residues: Serine/threonine-protein kinase ATG1c (733 aa).

In terms of domain architecture, Protein kinase spans 12 to 269; sequence YLVGRQIGSG…FEEFFNHPFL (258 aa). ATP contacts are provided by residues 18 to 26 and K41; that span reads IGSGSFSVV. Residue D134 is the Proton acceptor of the active site. Disordered stretches follow at residues 292–363 and 379–414; these read SSGS…ELTS and FETQINSDRRNRREPTGLTDSRSLIAPGRVDDSQDS. The segment covering 329 to 339 has biased composition (polar residues); it reads KKTSSMKSSSG. 2 stretches are compositionally biased toward basic and acidic residues: residues 342–360 and 379–393; these read VDTRIERKEVESSPLKHTE and FETQINSDRRNRREP. The AIM (Atg8-family-interacting motif) signature appears at 419 to 422; the sequence is FVLV. Disordered stretches follow at residues 565-596 and 713-733; these read GSPSQDINKLRSSSLKHDTHSSNKVTDLSHDG and HRRSSAGQMQGSSLAMMNRQS. The segment covering 566–577 has biased composition (polar residues); it reads SPSQDINKLRSS. Positions 579 to 596 are enriched in basic and acidic residues; that stretch reads LKHDTHSSNKVTDLSHDG. Over residues 717–733 the composition is skewed to polar residues; it reads SAGQMQGSSLAMMNRQS.

Belongs to the protein kinase superfamily. Ser/Thr protein kinase family.

It localises to the cytoplasmic vesicle. The protein resides in the autophagosome. Serine/threonine protein kinase involved in autophagy. The ATG1-ATG13 protein kinase complex regulates downstream events required for autophagosome enclosure and/or vacuolar delivery. The chain is Serine/threonine-protein kinase ATG1c from Arabidopsis thaliana (Mouse-ear cress).